The following is a 282-amino-acid chain: NAD-dependent protein deacetylase 1 (282 aa).

Positions 1-282 (MTVGRAESPE…ADELSPLPTH (282 aa)) constitute a Deacetylase sirtuin-type domain. Residues 25 to 45 (GAGI…SPPS) and 101 to 104 (QNVD) contribute to the NAD(+) site. H119 (proton acceptor) is an active-site residue. Residues C127, C130, C181, and C184 each contribute to the Zn(2+) site. NAD(+) contacts are provided by residues 221–223 (GSS), 247–249 (NRG), and C265.

The protein belongs to the sirtuin family. Class II subfamily. Requires Zn(2+) as cofactor.

The protein localises to the cytoplasm. The catalysed reaction is N(6)-acetyl-L-lysyl-[protein] + NAD(+) + H2O = 2''-O-acetyl-ADP-D-ribose + nicotinamide + L-lysyl-[protein]. NAD-dependent protein deacetylase which modulates the activities of several enzymes which are inactive in their acetylated form. The protein is NAD-dependent protein deacetylase 1 of Mycobacterium avium (strain 104).